The following is a 129-amino-acid chain: Large ribosomal subunit protein bL12 (129 aa).

The protein belongs to the bacterial ribosomal protein bL12 family. In terms of assembly, homodimer. Part of the ribosomal stalk of the 50S ribosomal subunit. Forms a multimeric L10(L12)X complex, where L10 forms an elongated spine to which 2 to 4 L12 dimers bind in a sequential fashion. Binds GTP-bound translation factors.

Its function is as follows. Forms part of the ribosomal stalk which helps the ribosome interact with GTP-bound translation factors. Is thus essential for accurate translation. This is Large ribosomal subunit protein bL12 from Fervidobacterium nodosum (strain ATCC 35602 / DSM 5306 / Rt17-B1).